The primary structure comprises 296 residues: tRNA dimethylallyltransferase (296 aa).

Residue 2-9 (GPTASGKT) participates in ATP binding. A substrate-binding site is contributed by 4-9 (TASGKT). 3 interaction with substrate tRNA regions span residues 27–30 (DSAL), 151–155 (QRLSR), and 232–237 (RCVGYR).

Belongs to the IPP transferase family. As to quaternary structure, monomer. Requires Mg(2+) as cofactor.

The catalysed reaction is adenosine(37) in tRNA + dimethylallyl diphosphate = N(6)-dimethylallyladenosine(37) in tRNA + diphosphate. Catalyzes the transfer of a dimethylallyl group onto the adenine at position 37 in tRNAs that read codons beginning with uridine, leading to the formation of N6-(dimethylallyl)adenosine (i(6)A). In Shewanella woodyi (strain ATCC 51908 / MS32), this protein is tRNA dimethylallyltransferase.